The sequence spans 932 residues: Protocadherin gamma-A9 (932 aa).

The N-terminal stretch at 1–28 is a signal peptide; it reads MAAPTKCQLRGRLVLLCSLLGMLWEARA. Cadherin domains follow at residues 29 to 133, 134 to 242, 243 to 347, 348 to 452, 453 to 562, and 570 to 683; these read SQIR…APKF, QAES…APVF, AQRI…RPEV, TITS…PPAF, SQAS…APEI, and DGST…IPAD. The Extracellular portion of the chain corresponds to 29 to 692; it reads SQIRYSVPEE…DLEASDLTLY (664 aa). N47 and N127 each carry an N-linked (GlcNAc...) asparagine glycan. N389, N419, and N545 each carry an N-linked (GlcNAc...) asparagine glycan. The helical transmembrane segment at 693-713 threads the bilayer; sequence LVVAVAVVSCVFLTFVITLLA. The Cytoplasmic segment spans residues 714–932; that stretch reads LRLRHWHSSH…KKKSGKKEKK (219 aa). Disordered regions lie at residues 803–841 and 902–932; these read DTPL…WPNN and ATLT…KEKK. Polar residues predominate over residues 816 to 841; it reads WRFSQAQRPGTSGSQNGDDTGTWPNN. Positions 922–932 are enriched in basic residues; it reads NKKKSGKKEKK.

It is found in the cell membrane. Its function is as follows. Potential calcium-dependent cell-adhesion protein. May be involved in the establishment and maintenance of specific neuronal connections in the brain. The chain is Protocadherin gamma-A9 (PCDHGA9) from Pan troglodytes (Chimpanzee).